A 488-amino-acid polypeptide reads, in one-letter code: Thiamine transporter 2 (488 aa).

Topologically, residues 1 to 8 (MDSSCRTP) are cytoplasmic. Residues 9-29 (PSNSWVYPTVILCLFGFFSMF) traverse the membrane as a helical segment. Residues 30-54 (RPSEAFLIPFLSEPSKNLTSPEMTN) are Extracellular-facing. Asparagine 46 is a glycosylation site (N-linked (GlcNAc...) asparagine). A helical membrane pass occupies residues 55–75 (EILPVWTYSYLATLPPVFVLT). Residues 76-82 (DYLRYKP) lie on the Cytoplasmic side of the membrane. Residues 83–103 (VIMLHVVAFATSYLFLLFGQG) form a helical membrane-spanning segment. At 104–111 (VMLMQTAE) the chain is on the extracellular side. The chain crosses the membrane as a helical span at residues 112 to 132 (FFFGVVSATEIAYFAYIYSMV). Topologically, residues 133-145 (SPEHYQKVSSYCR) are cytoplasmic. The helical transmembrane segment at 146-166 (SITLVAYTAGSVLAQLLVSLT) threads the bilayer. The Extracellular portion of the chain corresponds to 167-172 (NLPYSS). A helical transmembrane segment spans residues 173 to 193 (LFYISLACVSVAFFFSLFLPM). Topologically, residues 194 to 276 (PKKSMFFHAK…YSSKHLVYWS (83 aa)) are cytoplasmic. Residues 277-297 (LWWAFATAGYNQILNYVQVLW) form a helical membrane-spanning segment. Topologically, residues 298–310 (EHKAPSQDSSIYN) are extracellular. A helical membrane pass occupies residues 311–331 (GAVEAIATFGGALASFSVGYL). Topologically, residues 332-335 (KVNW) are cytoplasmic. A helical transmembrane segment spans residues 336-356 (DLLGELGLAVFSAVIAGSLFL). The Extracellular segment spans residues 357–369 (MNYSRSIWVCYAG). The N-linked (GlcNAc...) asparagine glycan is linked to asparagine 358. Residues 370–390 (YLLVKSSYSFLITIAVFQIAV) traverse the membrane as a helical segment. At 391–399 (NLSLERYAL) the chain is on the cytoplasmic side. The chain crosses the membrane as a helical span at residues 400 to 420 (VFGIDTFIALVIQTIMTMIVV). At 421-428 (DQRGLQLP) the chain is on the extracellular side. Residues 429–449 (VTTQFLVYGSYFAVIAGVFLM) form a helical membrane-spanning segment. Residues 450 to 488 (RSIYILCSAKCRKEVQNLATTRSPNEPHPQEPSNVSTKF) lie on the Cytoplasmic side of the membrane. The tract at residues 469–488 (TTRSPNEPHPQEPSNVSTKF) is disordered.

The protein belongs to the reduced folate carrier (RFC) transporter (TC 2.A.48) family. In terms of tissue distribution, high expression in kidney, brain, lung and small intestine. Detected in pancreatic acinar cells (at protein level). Also expressed strongly in pancreatic islet cells.

It localises to the membrane. The catalysed reaction is thiamine(out) + H(+)(in) = thiamine(in) + H(+)(out). Functionally, high-affinity transporter for the intake of thiamine. Unlike the human ortholog, lacks H(+)-dependent pyridoxine transport activity due to an absence of seven critical amino-acids required for pyridoxine transport. This is Thiamine transporter 2 (Slc19a3) from Mus musculus (Mouse).